A 316-amino-acid polypeptide reads, in one-letter code: Probable 5-dehydro-4-deoxyglucarate dehydratase (316 aa).

This sequence belongs to the DapA family.

It carries out the reaction 5-dehydro-4-deoxy-D-glucarate + H(+) = 2,5-dioxopentanoate + CO2 + H2O. Its pathway is carbohydrate acid metabolism; D-glucarate degradation; 2,5-dioxopentanoate from D-glucarate: step 2/2. In Corynebacterium glutamicum (strain R), this protein is Probable 5-dehydro-4-deoxyglucarate dehydratase.